The chain runs to 849 residues: ATP-binding cassette sub-family B member 6 (849 aa).

Residues 1–25 (MVRLGSYCEHNGSISQAWLDSGLSP) lie on the Lumenal side of the membrane. The segment at 1-195 (MVRLGSYCEH…TLFLFVLGIR (195 aa)) is required for the lysosomal targeting. A required for ATPase activity region spans residues 1–227 (MVRLGSYCEH…SQPLLRDPNQ (227 aa)). A disulfide bridge connects residues Cys8 and Cys26. N-linked (GlcNAc...) asparagine glycosylation occurs at Asn11. Residues 26–46 (CFYFTLVPSVLLSFSFLLGAL) form a helical membrane-spanning segment. Over 47 to 72 (QSALYARHSTTMEPKYIPRSRLYRLQ) the chain is Cytoplasmic. The chain crosses the membrane as a helical span at residues 73-93 (IVLSVVLILQSVIGLIWQAAG). Topologically, residues 94–98 (TDVVY) are lumenal. The chain crosses the membrane as a helical span at residues 99–119 (GYMIVHGCLSVVAWGFSLWLL). Residues 120–136 (HLERTRALVREKSRGHG) are Cytoplasmic-facing. A helical membrane pass occupies residues 137–157 (VVLLLFWALAFAAENLAFISW). The Lumenal segment spans residues 158-173 (QSPNWWWLSRDTVPQK). Residues 174–194 (VQFGLWITRYVCTLFLFVLGI) form a helical membrane-spanning segment. Residues 195–254 (RAPGRPRKPYIVLINEDERDVETSQPLLRDPNQSTWQGFKKKLLLVMQYIWPRRNIPLQL) lie on the Cytoplasmic side of the membrane. A helical membrane pass occupies residues 255–275 (LVALCMGLMGLERAINVFVPI). The ABC transmembrane type-1 domain occupies 256-547 (VALCMGLMGL…FGTYYRMIQS (292 aa)). At 276-291 (YAKKIVDGLTEDSTWN) the chain is on the lumenal side. The helical transmembrane segment at 292–312 (ILAVTVCIYVLLKFLQGGGAG) threads the bilayer. Over 313 to 373 (TTGFLSNLRT…VDRGTSSINS (61 aa)) the chain is Cytoplasmic. Residues 374–394 (LLSYIVFSILPTIADIVIGIV) form a helical membrane-spanning segment. Topologically, residues 395 to 401 (YFTSSFN) are lumenal. A helical membrane pass occupies residues 402–422 (AWFGLIIFVCMTLYLTLTIII). At 423-492 (TEWRTKYRRE…ASLAMLNQTQ (70 aa)) the chain is on the cytoplasmic side. The chain crosses the membrane as a helical span at residues 493–513 (NLIIGLGLLAGSLLCAYFVTE). Topologically, residues 514 to 520 (NKFKVGD) are lumenal. The helical transmembrane segment at 521 to 541 (YVLFGTYIIQLYTPLNWFGTY) threads the bilayer. Residues 542–849 (YRMIQSSFID…PPKATPRRGH (308 aa)) are Cytoplasmic-facing. Positions 581–815 (IEFENVHFSY…GGVYAGMWQK (235 aa)) constitute an ABC transporter domain. Residues Tyr590 and 614-625 (GPSGSGKSTIIR) each bind ATP. Residues 814-825 (QKQQSGSESSSD) show a composition bias toward low complexity. Residues 814 to 849 (QKQQSGSESSSDSDSERKDRTSEKLQPPKATPRRGH) are disordered. Over residues 827–836 (DSERKDRTSE) the composition is skewed to basic and acidic residues.

This sequence belongs to the ABC transporter superfamily. ABCB family. Heavy Metal importer (TC 3.A.1.210) subfamily. Homodimer. N-glycosylated.

It localises to the cell membrane. The protein localises to the mitochondrion outer membrane. It is found in the endoplasmic reticulum membrane. The protein resides in the golgi apparatus membrane. Its subcellular location is the endosome membrane. It localises to the lysosome membrane. The protein localises to the late endosome membrane. It is found in the early endosome membrane. The protein resides in the secreted. Its subcellular location is the extracellular exosome. It localises to the mitochondrion. The protein localises to the endosome. It is found in the multivesicular body membrane. The protein resides in the melanosome membrane. It catalyses the reaction heme b(in) + ATP + H2O = heme b(out) + ADP + phosphate + H(+). The enzyme catalyses coproporphyrin III(in) + ATP + H2O = coproporphyrin III(out) + ADP + phosphate + H(+). The catalysed reaction is pheophorbide a(in) + ATP + H2O = pheophorbide a(out) + ADP + phosphate + H(+). It carries out the reaction coproporphyrinogen III(in) + ATP + H2O = coproporphyrinogen III(out) + ADP + phosphate + H(+). It catalyses the reaction protoporphyrin IX(in) + ATP + H2O = protoporphyrin IX(out) + ADP + phosphate + H(+). The enzyme catalyses coproporphyrin I(in) + ATP + H2O = coproporphyrin I(out) + ADP + phosphate + H(+). The catalysed reaction is uroporphyrin I(in) + ATP + H2O = uroporphyrin I(out) + ADP + phosphate + H(+). It carries out the reaction uroporphyrin III(in) + ATP + H2O = uroporphyrin III(out) + ADP + phosphate + H(+). ATP-dependent transporter that catalyzes the transport of a broad-spectrum of porphyrins from the cytoplasm to the extracellular space through the plasma membrane or into the vesicle lumen. May also function as an ATP-dependent importer of porphyrins from the cytoplasm into the mitochondria, in turn may participate in the de novo heme biosynthesis regulation and in the coordination of heme and iron homeostasis during phenylhydrazine stress. May also play a key role in the early steps of melanogenesis producing PMEL amyloid fibrils. In vitro, it confers to cells a resistance to toxic metal such as arsenic and cadmium and against chemotherapeutics agent such as 5-fluorouracil, SN-38 and vincristin. In addition may play a role in the transition metal homeostasis. This is ATP-binding cassette sub-family B member 6 (abcb6) from Xenopus tropicalis (Western clawed frog).